Reading from the N-terminus, the 248-residue chain is Carboxy-S-adenosyl-L-methionine synthase (248 aa).

S-adenosyl-L-methionine-binding positions include Tyr-40, 65–67 (GCS), 95–96 (DN), 123–124 (DI), Asn-138, and Arg-205.

The protein belongs to the class I-like SAM-binding methyltransferase superfamily. Cx-SAM synthase family. Homodimer.

The enzyme catalyses prephenate + S-adenosyl-L-methionine = carboxy-S-adenosyl-L-methionine + 3-phenylpyruvate + H2O. Catalyzes the conversion of S-adenosyl-L-methionine (SAM) to carboxy-S-adenosyl-L-methionine (Cx-SAM). In Hahella chejuensis (strain KCTC 2396), this protein is Carboxy-S-adenosyl-L-methionine synthase.